The following is a 288-amino-acid chain: ATP synthase subunit a (288 aa).

The next 6 membrane-spanning stretches (helical) occupy residues 47–67, 104–124, 157–177, 199–219, 237–257, and 258–278; these read LDSM…FWMV, LIAP…LMDL, DPNI…FYSI, PIVQ…TLIA, LIFI…SVPW, and AIFH…LTIV.

The protein belongs to the ATPase A chain family. F-type ATPases have 2 components, CF(1) - the catalytic core - and CF(0) - the membrane proton channel. CF(1) has five subunits: alpha(3), beta(3), gamma(1), delta(1), epsilon(1). CF(0) has three main subunits: a(1), b(2) and c(9-12). The alpha and beta chains form an alternating ring which encloses part of the gamma chain. CF(1) is attached to CF(0) by a central stalk formed by the gamma and epsilon chains, while a peripheral stalk is formed by the delta and b chains.

It is found in the cell inner membrane. Key component of the proton channel; it plays a direct role in the translocation of protons across the membrane. In Psychrobacter cryohalolentis (strain ATCC BAA-1226 / DSM 17306 / VKM B-2378 / K5), this protein is ATP synthase subunit a.